We begin with the raw amino-acid sequence, 436 residues long: Eukaryotic translation initiation factor 4B (436 aa).

Positions 56 to 98 are disordered; it reads AKNNSNNTRSGGFGGSFGGRSRLDPALGGGSSDRREEYPVPDA. Serine 65 and serine 71 each carry phosphoserine. Residues 101–183 form the RRM domain; it reads YRAVINNIPW…RTVYVSVAAP (83 aa). The interval 185–406 is disordered; the sequence is RGGGADVDWS…EKQNGDAKEN (222 aa). The stretch at 190–210 is one 1; approximate repeat; sequence DVDWSSARGSNFQGDGREDAP. The 7 X approximate tandem repeats stretch occupies residues 190 to 350; it reads DVDWSSARGS…DWGAARGAQF (161 aa). 5 consecutive repeat copies span residues 211-232, 233-258, 259-284, 285-310, and 311-340. The span at 329–338 shows a compositional bias: basic and acidic residues; sequence PRREREKEEP. The 7; truncated repeat unit spans residues 341-350; sequence DWGAARGAQF. 2 stretches are compositionally biased toward basic and acidic residues: residues 359 to 376 and 397 to 406; these read TYKDRSLTNKKTTDEQPK and EKQNGDAKEN.

Involved in translation initiation. May be the homolog of mammalian eIF4B and be part of an RNA helicase. STM1/TIF3 is a non-essential gene. The polypeptide is Eukaryotic translation initiation factor 4B (TIF3) (Saccharomyces cerevisiae (strain ATCC 204508 / S288c) (Baker's yeast)).